The primary structure comprises 100 residues: Urease subunit gamma (100 aa).

It belongs to the urease gamma subunit family. As to quaternary structure, heterotrimer of UreA (gamma), UreB (beta) and UreC (alpha) subunits. Three heterotrimers associate to form the active enzyme.

The protein resides in the cytoplasm. The catalysed reaction is urea + 2 H2O + H(+) = hydrogencarbonate + 2 NH4(+). Its pathway is nitrogen metabolism; urea degradation; CO(2) and NH(3) from urea (urease route): step 1/1. This Prochlorococcus marinus (strain AS9601) protein is Urease subunit gamma.